Here is a 238-residue protein sequence, read N- to C-terminus: Fatty acid metabolism regulator protein (238 aa).

An HTH gntR-type domain is found at Lys-6–Phe-74. The segment at residues Glu-34 to Gln-53 is a DNA-binding region (H-T-H motif).

As to quaternary structure, homodimer.

It is found in the cytoplasm. In terms of biological role, multifunctional regulator of fatty acid metabolism. The chain is Fatty acid metabolism regulator protein from Shewanella baltica (strain OS185).